Consider the following 475-residue polypeptide: Bifunctional protein HldE (475 aa).

The ribokinase stretch occupies residues 1 to 318 (MKITLPEFGK…ANALYTEQET (318 aa)). 195–198 (NMSE) is a binding site for ATP. D264 is an active-site residue. A cytidylyltransferase region spans residues 344-475 (MTNGCFDILH…DIIKTIRERG (132 aa)).

In the N-terminal section; belongs to the carbohydrate kinase PfkB family. The protein in the C-terminal section; belongs to the cytidylyltransferase family. As to quaternary structure, homodimer.

The enzyme catalyses D-glycero-beta-D-manno-heptose 7-phosphate + ATP = D-glycero-beta-D-manno-heptose 1,7-bisphosphate + ADP + H(+). The catalysed reaction is D-glycero-beta-D-manno-heptose 1-phosphate + ATP + H(+) = ADP-D-glycero-beta-D-manno-heptose + diphosphate. It functions in the pathway nucleotide-sugar biosynthesis; ADP-L-glycero-beta-D-manno-heptose biosynthesis; ADP-L-glycero-beta-D-manno-heptose from D-glycero-beta-D-manno-heptose 7-phosphate: step 1/4. Its pathway is nucleotide-sugar biosynthesis; ADP-L-glycero-beta-D-manno-heptose biosynthesis; ADP-L-glycero-beta-D-manno-heptose from D-glycero-beta-D-manno-heptose 7-phosphate: step 3/4. Functionally, catalyzes the phosphorylation of D-glycero-D-manno-heptose 7-phosphate at the C-1 position to selectively form D-glycero-beta-D-manno-heptose-1,7-bisphosphate. Its function is as follows. Catalyzes the ADP transfer from ATP to D-glycero-beta-D-manno-heptose 1-phosphate, yielding ADP-D-glycero-beta-D-manno-heptose. This Aeromonas salmonicida (strain A449) protein is Bifunctional protein HldE.